A 282-amino-acid polypeptide reads, in one-letter code: Bifunctional protein FolD (282 aa).

Residues 164 to 166 and Ser189 contribute to the NADP(+) site; that span reads GRS.

Belongs to the tetrahydrofolate dehydrogenase/cyclohydrolase family. As to quaternary structure, homodimer.

The catalysed reaction is (6R)-5,10-methylene-5,6,7,8-tetrahydrofolate + NADP(+) = (6R)-5,10-methenyltetrahydrofolate + NADPH. The enzyme catalyses (6R)-5,10-methenyltetrahydrofolate + H2O = (6R)-10-formyltetrahydrofolate + H(+). It functions in the pathway one-carbon metabolism; tetrahydrofolate interconversion. In terms of biological role, catalyzes the oxidation of 5,10-methylenetetrahydrofolate to 5,10-methenyltetrahydrofolate and then the hydrolysis of 5,10-methenyltetrahydrofolate to 10-formyltetrahydrofolate. The chain is Bifunctional protein FolD from Lactobacillus helveticus (strain DPC 4571).